The chain runs to 881 residues: Probable alpha/beta-glucosidase agdC (881 aa).

Positions 1 to 14 (MLRSLLLLAPLVGA) are cleaved as a signal peptide. Asn-171, Asn-293, and Asn-373 each carry an N-linked (GlcNAc...) asparagine glycan. The active-site Nucleophile is Asp-422. The active site involves Glu-425. Positions 440-485 (YARDNDLPPAAPPVRPSNPRPLPGFPGDFQPSSSSKRSTKGSKVGL) are disordered. Over residues 448–463 (PAAPPVRPSNPRPLPG) the composition is skewed to pro residues. An N-linked (GlcNAc...) asparagine glycan is attached at Asn-506. The Proton donor role is filled by Asp-571. Asn-572, Asn-608, and Asn-742 each carry an N-linked (GlcNAc...) asparagine glycan.

Belongs to the glycosyl hydrolase 31 family.

The protein resides in the secreted. It catalyses the reaction Hydrolysis of terminal, non-reducing (1-&gt;4)-linked alpha-D-glucose residues with release of alpha-D-glucose.. It carries out the reaction Hydrolysis of terminal, non-reducing beta-D-glucosyl residues with release of beta-D-glucose.. Glucosidase involved in the degradation of cellulosic biomass. Has both alpha- and beta-glucosidase activity. This is Probable alpha/beta-glucosidase agdC (agdC) from Aspergillus fumigatus (strain CBS 144.89 / FGSC A1163 / CEA10) (Neosartorya fumigata).